The sequence spans 394 residues: Elongation factor Tu (394 aa).

Residues 10–204 (KPHVNVGTIG…ALDTYIPEPE (195 aa)) form the tr-type G domain. Positions 19-26 (GHVDHGKT) are G1. 19 to 26 (GHVDHGKT) contacts GTP. Residue threonine 26 coordinates Mg(2+). Positions 60–64 (GITIN) are G2. The tract at residues 81–84 (DCPG) is G3. Residues 81-85 (DCPGH) and 136-139 (NKCD) each bind GTP. The G4 stretch occupies residues 136 to 139 (NKCD). Positions 174-176 (SAL) are G5.

Belongs to the TRAFAC class translation factor GTPase superfamily. Classic translation factor GTPase family. EF-Tu/EF-1A subfamily. In terms of assembly, monomer.

It localises to the cytoplasm. The enzyme catalyses GTP + H2O = GDP + phosphate + H(+). Functionally, GTP hydrolase that promotes the GTP-dependent binding of aminoacyl-tRNA to the A-site of ribosomes during protein biosynthesis. This is Elongation factor Tu from Shewanella denitrificans (strain OS217 / ATCC BAA-1090 / DSM 15013).